The primary structure comprises 220 residues: Probable nicotinate-nucleotide adenylyltransferase (220 aa).

Belongs to the NadD family.

It carries out the reaction nicotinate beta-D-ribonucleotide + ATP + H(+) = deamido-NAD(+) + diphosphate. It functions in the pathway cofactor biosynthesis; NAD(+) biosynthesis; deamido-NAD(+) from nicotinate D-ribonucleotide: step 1/1. Its function is as follows. Catalyzes the reversible adenylation of nicotinate mononucleotide (NaMN) to nicotinic acid adenine dinucleotide (NaAD). This chain is Probable nicotinate-nucleotide adenylyltransferase, found in Laribacter hongkongensis (strain HLHK9).